The chain runs to 416 residues: Floricaula/leafy homolog 2 (416 aa).

The tract at residues 154–237 (EGLSEEPVQQ…DASGGISERQ (84 aa)) is disordered. The span at 210 to 225 (AEEDEETEEGQEDDWN) shows a compositional bias: acidic residues. 3 consecutive DNA-binding regions follow at residues 238-242 (REHPF), 307-314 (NKPKMRHY), and 378-381 (YVPT).

This sequence belongs to the FLO/LFY family. Expressed in floral meristems and in indeterminate vegetative meristems.

It localises to the nucleus. In terms of biological role, probable transcription factor that act to specify determinacy in the progenitor cells for both flowers and leaves. The protein is Floricaula/leafy homolog 2 (FL2) of Nicotiana tabacum (Common tobacco).